The primary structure comprises 310 residues: S-methyl-5'-thioadenosine phosphorylase (310 aa).

Residues Thr-20, Arg-62 to His-63, and Ser-95 to Ala-96 contribute to the phosphate site. Residue Met-197 participates in substrate binding. Ser-198 serves as a coordination point for phosphate. Asp-221–Asp-223 serves as a coordination point for substrate.

Belongs to the PNP/MTAP phosphorylase family. MTAP subfamily. As to quaternary structure, homotrimer.

The protein resides in the cytoplasm. The protein localises to the nucleus. The catalysed reaction is S-methyl-5'-thioadenosine + phosphate = 5-(methylsulfanyl)-alpha-D-ribose 1-phosphate + adenine. Its pathway is amino-acid biosynthesis; L-methionine biosynthesis via salvage pathway; S-methyl-5-thio-alpha-D-ribose 1-phosphate from S-methyl-5'-thioadenosine (phosphorylase route): step 1/1. Functionally, catalyzes the reversible phosphorylation of S-methyl-5'-thioadenosine (MTA) to adenine and 5-methylthioribose-1-phosphate. Involved in the breakdown of MTA, a major by-product of polyamine biosynthesis. Responsible for the first step in the methionine salvage pathway after MTA has been generated from S-adenosylmethionine. Has broad substrate specificity with 6-aminopurine nucleosides as preferred substrates. The chain is S-methyl-5'-thioadenosine phosphorylase from Neurospora crassa (strain ATCC 24698 / 74-OR23-1A / CBS 708.71 / DSM 1257 / FGSC 987).